The sequence spans 592 residues: Prospero homeobox protein 2 (592 aa).

Disordered regions lie at residues 20–56 (EACTEGERSSSPPELDRDSPFPWSQVPSSSPTDPEWF), 85–129 (GNAQ…RKGG), 155–218 (KPRD…LPSG), 308–336 (RLDSPRYPIPPRMTPKPCQDPPANFPLTA), and 353–382 (RYNNGHWSSSPPQDSSSQRHPSSEPALRPW). The segment covering 95-106 (CPKKARERKRKQ) has biased composition (basic residues). Residues 201 to 211 (SGAEKHQESEK) show a composition bias toward basic and acidic residues. The segment covering 314–331 (YPIPPRMTPKPCQDPPAN) has biased composition (pro residues). The span at 360–377 (SSSPPQDSSSQRHPSSEP) shows a compositional bias: low complexity. The Prospero-type homeo domain occupies 437 to 495 (QEGLNPGHLKKAKLMFFFTRYPSSNLLKVYFPDVQFNRCITSQMIKWFSNFREFYYIQM). The homeo-Prospero stretch occupies residues 437–592 (QEGLNPGHLK…EIFKSSSYPQ (156 aa)). One can recognise a Prospero domain in the interval 496–592 (EKSARQAISD…EIFKSSSYPQ (97 aa)).

Belongs to the Prospero homeodomain family.

It localises to the nucleus. Its function is as follows. Transcription regulator. Does not seem to be essential for embryonic development and postnatal survival. The polypeptide is Prospero homeobox protein 2 (PROX2) (Homo sapiens (Human)).